A 421-amino-acid chain; its full sequence is Testin (421 aa).

The 108-residue stretch at 92–199 (MILTNPVAAK…GDVKLPCEMD (108 aa)) folds into the PET domain. 3 consecutive LIM zinc-binding domains span residues 234 to 297 (YSCY…CDSE), 299 to 359 (PRCA…NHAV), and 362 to 421 (QGCH…KRMS).

It belongs to the prickle / espinas / testin family. In terms of assembly, interacts via LIM domain 1 with ZYX. Interacts (via LIM domain 3) with ENAH and VASP. Interacts with ALKBH4, talin, actin, alpha-actinin, GRIP1 and PXN. Interacts (via LIM domain 2) with ACTL7A (via N-terminus). Heterodimer with ACTL7A; the heterodimer interacts with ENAH to form a heterotrimer.

It localises to the cytoplasm. It is found in the cell junction. The protein localises to the focal adhesion. Functionally, scaffold protein that may play a role in cell adhesion, cell spreading and in the reorganization of the actin cytoskeleton. Plays a role in the regulation of cell proliferation. May act as a tumor suppressor. The chain is Testin (TES) from Nomascus leucogenys (Northern white-cheeked gibbon).